A 112-amino-acid chain; its full sequence is Large ribosomal subunit protein mL53 (112 aa).

This sequence belongs to the mitochondrion-specific ribosomal protein mL53 family. In terms of assembly, component of the mitochondrial large ribosomal subunit (mt-LSU). Mature mammalian 55S mitochondrial ribosomes consist of a small (28S) and a large (39S) subunit. The 28S small subunit contains a 12S ribosomal RNA (12S mt-rRNA) and 30 different proteins. The 39S large subunit contains a 16S rRNA (16S mt-rRNA), a copy of mitochondrial valine transfer RNA (mt-tRNA(Val)), which plays an integral structural role, and 52 different proteins. mL53 is located at the L7/L12 stalk.

Its subcellular location is the mitochondrion. In Homo sapiens (Human), this protein is Large ribosomal subunit protein mL53 (MRPL53).